The following is a 261-amino-acid chain: Undecaprenyl-diphosphatase 2 (261 aa).

The next 8 helical transmembrane spans lie at 1–21 (MLEALLLGVVEGLTEFLPISS), 38–58 (PGKTYEIVVQLGAILAVCVVF), 75–95 (FAFARNVMVAFLPAAVIGATL), 103–123 (LESPLVAAIALVVGGVAILVI), 138–158 (MSPALALGVGFCQVLAMVPGV), 178–198 (AAEFSFFLAIPTMCGASAYSL), 212–232 (LIALGFVAAFLSALVVVKGFI), and 240–260 (FAPFAWYRIAFGSLMAVLILM).

Belongs to the UppP family.

The protein localises to the cell inner membrane. It carries out the reaction di-trans,octa-cis-undecaprenyl diphosphate + H2O = di-trans,octa-cis-undecaprenyl phosphate + phosphate + H(+). In terms of biological role, catalyzes the dephosphorylation of undecaprenyl diphosphate (UPP). Confers resistance to bacitracin. In Paramagnetospirillum magneticum (strain ATCC 700264 / AMB-1) (Magnetospirillum magneticum), this protein is Undecaprenyl-diphosphatase 2.